Consider the following 292-residue polypeptide: Phosphatidylglycerol--prolipoprotein diacylglyceryl transferase (292 aa).

Transmembrane regions (helical) follow at residues 7 to 27 (IILS…FLRE), 45 to 65 (FQLR…YVLA), 83 to 103 (LFWG…IFNW), and 116 to 136 (IWHG…MIFI). A 1,2-diacyl-sn-glycero-3-phospho-(1'-sn-glycerol) is bound at residue arginine 165. The next 2 helical transmembrane spans lie at 204–224 (PTFL…YFFV) and 264–284 (AAQV…AYII).

This sequence belongs to the Lgt family.

It localises to the cell inner membrane. It carries out the reaction L-cysteinyl-[prolipoprotein] + a 1,2-diacyl-sn-glycero-3-phospho-(1'-sn-glycerol) = an S-1,2-diacyl-sn-glyceryl-L-cysteinyl-[prolipoprotein] + sn-glycerol 1-phosphate + H(+). It participates in protein modification; lipoprotein biosynthesis (diacylglyceryl transfer). Catalyzes the transfer of the diacylglyceryl group from phosphatidylglycerol to the sulfhydryl group of the N-terminal cysteine of a prolipoprotein, the first step in the formation of mature lipoproteins. In Fervidobacterium nodosum (strain ATCC 35602 / DSM 5306 / Rt17-B1), this protein is Phosphatidylglycerol--prolipoprotein diacylglyceryl transferase.